Here is a 316-residue protein sequence, read N- to C-terminus: Apolipoprotein E (316 aa).

The first 18 residues, 1 to 18, serve as a signal peptide directing secretion; it reads MKVLWVALVITLLAGCQA. Tandem repeats lie at residues 79–100, 101–122, 123–144, 145–166, 167–188, 189–210, 211–232, and 233–254. The segment at 79 to 254 is 8 X 22 AA approximate tandem repeats; the sequence is VLMDETMKEV…HLEEMREQLE (176 aa). M142 is subject to Methionine sulfoxide. Residues 157–167 are LDL and other lipoprotein receptors binding; the sequence is HLRKLRKRLLR. Residue 161–164 coordinates heparin; that stretch reads LRKR. The tract at residues 209–289 is lipid-binding and lipoprotein association; the sequence is AATVGTLASQ…SWFEPLVEDM (81 aa). Residue 228–235 participates in heparin binding; the sequence is HQKLRGRV. Positions 265 to 316 are homooligomerization; sequence SQMRLQAEAFQARLKSWFEPLVEDMQRQWAGLVEKVQLAMATSSTSAPSENH. The tract at residues 277 to 289 is specificity for association with VLDL; the sequence is RLKSWFEPLVEDM.

This sequence belongs to the apolipoprotein A1/A4/E family. In terms of assembly, homotetramer. May interact with ABCA1; functionally associated with ABCA1 in the biogenesis of HDLs. May interact with APP/A4 amyloid-beta peptide; the interaction is extremely stable in vitro but its physiological significance is unclear. May interact with MAPT. May interact with MAP2. In the cerebrospinal fluid, interacts with secreted SORL1. Interacts with PMEL; this allows the loading of PMEL luminal fragment on ILVs to induce fibril nucleation. APOE exists as multiple glycosylated and sialylated glycoforms within cells and in plasma. The extent of glycosylation and sialylation are tissue and context specific. In terms of processing, glycated in plasma VLDL. Post-translationally, phosphorylated by FAM20C in the extracellular medium.

The protein resides in the secreted. Its subcellular location is the extracellular space. The protein localises to the extracellular matrix. It is found in the extracellular vesicle. It localises to the endosome. The protein resides in the multivesicular body. Functionally, APOE is an apolipoprotein, a protein associating with lipid particles, that mainly functions in lipoprotein-mediated lipid transport between organs via the plasma and interstitial fluids. APOE is a core component of plasma lipoproteins and is involved in their production, conversion and clearance. Apolipoproteins are amphipathic molecules that interact both with lipids of the lipoprotein particle core and the aqueous environment of the plasma. As such, APOE associates with chylomicrons, chylomicron remnants, very low density lipoproteins (VLDL) and intermediate density lipoproteins (IDL) but shows a preferential binding to high-density lipoproteins (HDL). It also binds a wide range of cellular receptors including the LDL receptor/LDLR and the very low-density lipoprotein receptor/VLDLR that mediate the cellular uptake of the APOE-containing lipoprotein particles. Finally, APOE also has a heparin-binding activity and binds heparan-sulfate proteoglycans on the surface of cells, a property that supports the capture and the receptor-mediated uptake of APOE-containing lipoproteins by cells. The chain is Apolipoprotein E (APOE) from Lipotes vexillifer (Yangtze river dolphin).